The following is a 426-amino-acid chain: Dihydroorotase (426 aa).

Residues histidine 58 and histidine 60 each contribute to the Zn(2+) site. Residues 60–62 (HLR) and asparagine 92 contribute to the substrate site. Zn(2+) contacts are provided by aspartate 150, histidine 177, and histidine 230. A substrate-binding site is contributed by asparagine 276. Aspartate 303 contacts Zn(2+). Residue aspartate 303 is part of the active site. Residues histidine 307 and 321–322 (FG) each bind substrate.

This sequence belongs to the metallo-dependent hydrolases superfamily. DHOase family. Class I DHOase subfamily. Zn(2+) serves as cofactor.

It catalyses the reaction (S)-dihydroorotate + H2O = N-carbamoyl-L-aspartate + H(+). Its pathway is pyrimidine metabolism; UMP biosynthesis via de novo pathway; (S)-dihydroorotate from bicarbonate: step 3/3. Catalyzes the reversible cyclization of carbamoyl aspartate to dihydroorotate. In Listeria monocytogenes serotype 4a (strain HCC23), this protein is Dihydroorotase.